The following is a 71-amino-acid chain: Palustrin-Ca (71 aa).

Residues 1–22 form the signal peptide; that stretch reads MFTLKKSLLLLFFLGTISLSLC. Residues 23–40 constitute a propeptide that is removed on maturation; that stretch reads EQERDADGDEGEVEEVKR. The cysteines at positions 63 and 69 are disulfide-linked.

The protein belongs to the frog skin active peptide (FSAP) family. Brevinin subfamily. As to expression, expressed by the skin glands.

The protein resides in the secreted. The protein localises to the target cell membrane. Antibacterial peptide with amphipathic alpha-helical structure that exhibits potent broad-spectrum activity against Gram-positive and -negative bacteria. It is active against Listeria ATCC 54004 (MIC=30 ug/ml), S.aureus ATCC 25923 (MIC=7.8 ug/ml), S.suis 2 CVCC 606 (MIC=31.25 ug/ml), B.subtilis ADB403 (30 ug/ml), K.pneumoniae ATCC 700603 (MIC=60 ug/ml) and P.aeruginosa ATCC 227853 (MIC=30 ug/ml). Does not show activity against Salmonella ATCC 20020 and the fungus Candida albicans. Is also cytotoxic to HeLa cells at high concentrations. In addition, shows a strong antitumor activity but only a little hemolytic activity. Despite the presence of a Gly residue at position 10, this alpha-helical peptide remains relatively rigid, not exhibiting any significant flexibility during the molecular dynamics simulation. The peptide shows a preference for a position parallel to the target membrane that suggests it exerts its antimicrobial activity through a non-pore-forming mechanism of action, such as the carpet model or the interfacial activity model. The sequence is that of Palustrin-Ca from Aquarana catesbeiana (American bullfrog).